The chain runs to 528 residues: Sodium-dependent lysophosphatidylcholine symporter 1 (528 aa).

Topologically, residues 1 to 37 are cytoplasmic; it reads MAGGGGAERVRVGAAAAGLLPPSCRQPRRRESRERLS. A helical membrane pass occupies residues 38-66; sequence VCSKLCYAVGGAPYQTTGCALGFFLQIYL. At 67–73 the chain is on the extracellular side; the sequence is LDVAQLD. The chain crosses the membrane as a helical span at residues 74–99; the sequence is PFYASIILFVGRAWDAITDPMVGFFI. The Cytoplasmic portion of the chain corresponds to 100 to 109; the sequence is SKTPWTRFGR. Residues 110-129 form a helical membrane-spanning segment; sequence LMPWIIFSTPFAVISYFLIW. At 130–138 the chain is on the extracellular side; that stretch reads FVPDISTGQ. Residues 139-161 traverse the membrane as a helical segment; the sequence is VMWYLIFYCIFQTLVTCFHVPYS. Topologically, residues 162 to 176 are cytoplasmic; that stretch reads ALTMFISREQSERDS. Residues 177–199 form a helical membrane-spanning segment; it reads ATAYRMTVEVLGTVLGTAIQGQI. Topologically, residues 200-241 are extracellular; the sequence is VGKAVTPCIENPPFLSETNFSVAIRNVNMTHYTGSLADTRNA. Cysteines 207 and 460 form a disulfide. 2 N-linked (GlcNAc...) asparagine glycosylation sites follow: Asn218 and Asn227. The helical transmembrane segment at 242–263 threads the bilayer; that stretch reads YMVAAGVIGGLYILCAVILSVG. The Cytoplasmic portion of the chain corresponds to 264 to 295; it reads VREKRESSELQSDEPVSFFRGLKLVMNHGAYI. The chain crosses the membrane as a helical span at residues 296-319; the sequence is KLITGFLFTSLAFMLLEGNFALFC. At 320–328 the chain is on the extracellular side; it reads TYTLGFRNE. The chain crosses the membrane as a helical span at residues 329 to 351; sequence FQNILLAIMLSATLTIPFWQWFL. At 352–355 the chain is on the cytoplasmic side; the sequence is TRFG. Residues 356-376 form a helical membrane-spanning segment; the sequence is KKTAVYVGISSAVPFLITVVV. Residues 377 to 381 lie on the Extracellular side of the membrane; the sequence is LDSNL. Residues 382 to 404 form a helical membrane-spanning segment; it reads VVTYIVAVAAGISVAAAFLLPWS. The Cytoplasmic portion of the chain corresponds to 405 to 427; that stretch reads MLPDVIDDFKLQHPESRGHEAIF. The helical transmembrane segment at 428–450 threads the bilayer; that stretch reads FSFYVFFTKFTSGVSLGISTLSL. At 451–467 the chain is on the extracellular side; sequence DFAGYQTRGCSQPSEVN. A helical transmembrane segment spans residues 468–490; it reads ITLKLLVSAVPVGLILLGLLLFK. At 491-528 the chain is on the cytoplasmic side; the sequence is LYPIDEEKRRENKKALQDLREESNSSSESDSTELANIV. Residues 503-513 show a composition bias toward basic and acidic residues; the sequence is KKALQDLREES. Residues 503–528 form a disordered region; sequence KKALQDLREESNSSSESDSTELANIV. Over residues 514-528 the composition is skewed to low complexity; that stretch reads NSSSESDSTELANIV.

Belongs to the major facilitator superfamily.

It localises to the cell membrane. It is found in the endoplasmic reticulum membrane. It catalyses the reaction a 1-acyl-sn-glycero-3-phosphocholine(in) + Na(+)(in) = a 1-acyl-sn-glycero-3-phosphocholine(out) + Na(+)(out). The catalysed reaction is 1-(4Z,7Z,10Z,13Z,16Z,19Z-docosahexaenoyl)-sn-glycero-3-phosphocholine(in) + Na(+)(in) = 1-(4Z,7Z,10Z,13Z,16Z,19Z-docosahexaenoyl)-sn-glycero-3-phosphocholine(out) + Na(+)(out). It carries out the reaction 1-(9Z-octadecenoyl)-sn-glycero-3-phosphocholine(in) + Na(+)(in) = 1-(9Z-octadecenoyl)-sn-glycero-3-phosphocholine(out) + Na(+)(out). The enzyme catalyses 1-hexadecanoyl-sn-glycero-3-phosphocholine(in) + Na(+)(in) = 1-hexadecanoyl-sn-glycero-3-phosphocholine(out) + Na(+)(out). It catalyses the reaction a 1-acyl-sn-glycero-3-phosphoethanolamine(in) + Na(+)(in) = a 1-acyl-sn-glycero-3-phosphoethanolamine(out) + Na(+)(out). In terms of biological role, sodium-dependent lysophosphatidylcholine (LPC) symporter, which plays an essential role for blood-brain barrier formation and function. Specifically expressed in endothelium of the blood-brain barrier of micro-vessels and transports LPC into the brain. Transport of LPC is essential because it constitutes the major mechanism by which docosahexaenoic acid (DHA), an omega-3 fatty acid that is essential for normal brain growth and cognitive function, enters the brain. Transports LPC carrying long-chain fatty acids such LPC oleate and LPC palmitate with a minimum acyl chain length of 14 carbons. Does not transport docosahexaenoic acid in unesterified fatty acid. The polypeptide is Sodium-dependent lysophosphatidylcholine symporter 1 (Gallus gallus (Chicken)).